Reading from the N-terminus, the 225-residue chain is NAD(P)H-quinone oxidoreductase subunit K, chloroplastic (225 aa).

[4Fe-4S] cluster is bound by residues Cys-43, Cys-44, Cys-108, and Cys-139.

Belongs to the complex I 20 kDa subunit family. In terms of assembly, NDH is composed of at least 16 different subunits, 5 of which are encoded in the nucleus. It depends on [4Fe-4S] cluster as a cofactor.

The protein resides in the plastid. It localises to the chloroplast thylakoid membrane. It carries out the reaction a plastoquinone + NADH + (n+1) H(+)(in) = a plastoquinol + NAD(+) + n H(+)(out). The catalysed reaction is a plastoquinone + NADPH + (n+1) H(+)(in) = a plastoquinol + NADP(+) + n H(+)(out). NDH shuttles electrons from NAD(P)H:plastoquinone, via FMN and iron-sulfur (Fe-S) centers, to quinones in the photosynthetic chain and possibly in a chloroplast respiratory chain. The immediate electron acceptor for the enzyme in this species is believed to be plastoquinone. Couples the redox reaction to proton translocation, and thus conserves the redox energy in a proton gradient. This Nymphaea alba (White water-lily) protein is NAD(P)H-quinone oxidoreductase subunit K, chloroplastic.